A 1660-amino-acid polypeptide reads, in one-letter code: Cortactin-binding protein 2 (1660 aa).

Disordered stretches follow at residues M1–A26, K203–E222, I366–G440, and G454–S478. Residues R119 to K276 are a coiled coil. Low complexity predominate over residues P386–S396. The segment covering Q411–A422 has biased composition (polar residues). R498 is subject to Asymmetric dimethylarginine. Positions F499 to R596 are disordered. A compositionally biased stretch (polar residues) spans T583–Q593. ANK repeat units follow at residues G709–Y739, D743–A772, N776–H805, G809–V838, and D842–G871. The interval N872–S897 is disordered. Residues S875–S892 are compositionally biased toward acidic residues. Residues E912–R942 form an ANK 6 repeat. Residues C1445–P1477 form a disordered region. S1524 is subject to Phosphoserine. A disordered region spans residues R1617–K1660. Polar residues predominate over residues K1619 to N1640. Positions N1641–K1660 are enriched in basic and acidic residues.

In terms of assembly, interacts with CTTN/cortactin SH3 domain. Interacts with STRN, STRN4/zinedin and MOB4/phocein; this interactions mediate the association with the STRIPAK core complex and may regulate dendritic spine distribution of the STRIPAK complex in hippocampal neurons. Activation of glutamate receptors weakens the interaction with STRN and STRN4.

It localises to the cytoplasm. Its subcellular location is the cell cortex. It is found in the cell projection. The protein resides in the dendritic spine. Functionally, regulates the dendritic spine distribution of CTTN/cortactin in hippocampal neurons, and thus controls dendritic spinogenesis and dendritic spine maintenance. Associates with the striatin-interacting phosphatase and kinase (STRIPAK) core complex to regulate dendritic spine distribution of the STRIPAK complex in hippocampal neurons. This Ateles geoffroyi (Black-handed spider monkey) protein is Cortactin-binding protein 2 (CTTNBP2).